The chain runs to 184 residues: NADH-quinone oxidoreductase subunit B (184 aa).

Positions 63, 64, 128, and 158 each coordinate [4Fe-4S] cluster.

The protein belongs to the complex I 20 kDa subunit family. As to quaternary structure, NDH-1 is composed of 14 different subunits. Subunits NuoB, C, D, E, F, and G constitute the peripheral sector of the complex. [4Fe-4S] cluster serves as cofactor.

It localises to the cell inner membrane. It carries out the reaction a quinone + NADH + 5 H(+)(in) = a quinol + NAD(+) + 4 H(+)(out). Its function is as follows. NDH-1 shuttles electrons from NADH, via FMN and iron-sulfur (Fe-S) centers, to quinones in the respiratory chain. The immediate electron acceptor for the enzyme in this species is believed to be ubiquinone. Couples the redox reaction to proton translocation (for every two electrons transferred, four hydrogen ions are translocated across the cytoplasmic membrane), and thus conserves the redox energy in a proton gradient. The sequence is that of NADH-quinone oxidoreductase subunit B from Xylella fastidiosa (strain M12).